We begin with the raw amino-acid sequence, 119 residues long: Large ribosomal subunit protein uL22 (119 aa).

This sequence belongs to the universal ribosomal protein uL22 family. In terms of assembly, part of the 50S ribosomal subunit.

Functionally, this protein binds specifically to 23S rRNA; its binding is stimulated by other ribosomal proteins, e.g. L4, L17, and L20. It is important during the early stages of 50S assembly. It makes multiple contacts with different domains of the 23S rRNA in the assembled 50S subunit and ribosome. In terms of biological role, the globular domain of the protein is located near the polypeptide exit tunnel on the outside of the subunit, while an extended beta-hairpin is found that lines the wall of the exit tunnel in the center of the 70S ribosome. This is Large ribosomal subunit protein uL22 from Bifidobacterium longum (strain DJO10A).